A 1028-amino-acid chain; its full sequence is Contactin-3 (1028 aa).

An N-terminal signal peptide occupies residues 1-19; sequence MMFPWKQLILLSFIGCLGG. 6 consecutive Ig-like C2-type domains span residues 26–117, 122–208, 227–313, 318–402, 408–497, and 499–593; these read PVFI…AKLQ, ENFK…ARVL, PKIE…GRLT, PHWV…AELK, PDFS…LVVT, and PTRI…ADLI. 5 disulfide bridges follow: Cys50–Cys100, Cys144–Cys196, Cys249–Cys297, Cys339–Cys386, and Cys431–Cys479. N-linked (GlcNAc...) asparagine glycans are attached at residues Asn65 and Asn193. Asn375, Asn468, and Asn489 each carry an N-linked (GlcNAc...) asparagine glycan. Cys521 and Cys577 are joined by a disulfide. Fibronectin type-III domains follow at residues 600-698, 703-800, 805-901, and 902-998; these read PPEN…TEEA, PPSE…SAEE, APSQ…TKKT, and PPSQ…TSMD. The segment at 684 to 713 is disordered; the sequence is GEPSLPSEKVRTEEAVPEVPPSEVNGGGGS. Asn765, Asn860, Asn895, Asn913, Asn931, and Asn956 each carry an N-linked (GlcNAc...) asparagine glycan. Ser1002 carries GPI-anchor amidated serine lipidation. A propeptide spans 1003–1028 (removed in mature form); sequence TSAISNVHPMSSYMPIVLFLIVYVLW.

Belongs to the immunoglobulin superfamily. Contactin family. In terms of assembly, interacts with PTPRG. As to expression, in brain, it is expressed in frontal lobe, occipital lobe, cerebellum and amygdala.

Its subcellular location is the cell membrane. Contactins mediate cell surface interactions during nervous system development. Has some neurite outgrowth-promoting activity. The sequence is that of Contactin-3 (CNTN3) from Homo sapiens (Human).